A 189-amino-acid chain; its full sequence is GTP cyclohydrolase 1 (189 aa).

Residues Cys78, His81, and Cys150 each coordinate Zn(2+).

The protein belongs to the GTP cyclohydrolase I family. As to quaternary structure, homomer.

The catalysed reaction is GTP + H2O = 7,8-dihydroneopterin 3'-triphosphate + formate + H(+). Its pathway is cofactor biosynthesis; 7,8-dihydroneopterin triphosphate biosynthesis; 7,8-dihydroneopterin triphosphate from GTP: step 1/1. The chain is GTP cyclohydrolase 1 from Listeria monocytogenes serotype 4b (strain CLIP80459).